Consider the following 1551-residue polypeptide: Dual oxidase 1 (1551 aa).

Residues 1 to 21 form the signal peptide; sequence MAVYSAVAWILLFGVLASLGA. Over 22–596 the chain is Extracellular; it reads QNPVSWEVQR…YFKGSGFGFG (575 aa). The interval 26–593 is peroxidase-like; mediates peroxidase activity; sequence SWEVQRFDGW…VRDYFKGSGF (568 aa). Residues Asn94, Asn342, Asn354, Asn461, and Asn534 are each glycosylated (N-linked (GlcNAc...) asparagine). The chain crosses the membrane as a helical span at residues 597 to 617; sequence LTIGTLCCFPLVSLLSAWIVA. Residues 618–1044 are Cytoplasmic-facing; it reads RLRMRNFKRL…KRFIENYRRH (427 aa). 3 EF-hand domains span residues 815–850, 851–886, and 895–930; these read PQDM…FMKG, SPEE…FIEI, and QLAE…HDSD. Positions 828, 830, 832, 834, 839, 864, 866, 868, and 875 each coordinate Ca(2+). The interval 956–1248 is interaction with TXNDC11; it reads YISQEKICPS…GSFALIQMPR (293 aa). Residues 1045–1065 traverse the membrane as a helical segment; sequence IGCVAVFYTITGALFLERAYY. Topologically, residues 1066–1080 are extracellular; it reads YAFAAHHSGITDTTR. A helical transmembrane segment spans residues 1081–1101; that stretch reads VGIILSRGTAASISFMFSYIL. Residues 1087–1269 form the Ferric oxidoreductase domain; the sequence is RGTAASISFM…YVGDKLVSLS (183 aa). Residues 1102–1136 lie on the Cytoplasmic side of the membrane; the sequence is LTMCRNLITFLRETFLNRYIPFDAAVDFHRFIAST. Residues 1137-1157 form a helical membrane-spanning segment; sequence AIILTVLHSAGHVVNVYLFSI. Topologically, residues 1158–1188 are extracellular; that stretch reads SPLSVLSCLFPDLFHDDGSEFPQKYYWWFFQ. The chain crosses the membrane as a helical span at residues 1189–1209; sequence TVPGLTGVLLLLALAIMYVFA. The Cytoplasmic portion of the chain corresponds to 1210 to 1226; it reads SHHFRRRSFRGFWLTHH. A helical membrane pass occupies residues 1227-1247; the sequence is LYIFLYILLIIHGSFALIQMP. A topological domain (extracellular) is located at residue Arg1248. A helical transmembrane segment spans residues 1249 to 1269; it reads FHIFFLVPAIIYVGDKLVSLS. The region spanning 1270 to 1376 is the FAD-binding FR-type domain; sequence RKKVEISVVK…DGPFGEGHQE (107 aa). At 1270-1551 the chain is on the cytoplasmic side; sequence RKKVEISVVK…THFSHHYENF (282 aa).

In the N-terminal section; belongs to the peroxidase family. As to quaternary structure, interacts with TXNDC11, TPO and CYBA. Post-translationally, N-glycosylated. Expressed in thyrocytes (at protein level).

The protein localises to the apical cell membrane. It catalyses the reaction NADH + O2 + H(+) = H2O2 + NAD(+). The enzyme catalyses NADPH + O2 + H(+) = H2O2 + NADP(+). It participates in hormone biosynthesis; thyroid hormone biosynthesis. The NADPH oxidase activity is calcium-dependent. Peroxidase activity is inhibited by aminobenzohydrazide. Its function is as follows. Generates hydrogen peroxide which is required for the activity of thyroid peroxidase/TPO and lactoperoxidase/LPO. Plays a role in thyroid hormones synthesis and lactoperoxidase-mediated antimicrobial defense at the surface of mucosa. May have its own peroxidase activity through its N-terminal peroxidase-like domain. In Rattus norvegicus (Rat), this protein is Dual oxidase 1 (Duox1).